Consider the following 141-residue polypeptide: Nucleoside diphosphate kinase (141 aa).

Positions 11, 59, 87, 93, 104, and 114 each coordinate ATP. Catalysis depends on His-117, which acts as the Pros-phosphohistidine intermediate.

This sequence belongs to the NDK family. As to quaternary structure, homotetramer. Mg(2+) is required as a cofactor.

It localises to the cytoplasm. The enzyme catalyses a 2'-deoxyribonucleoside 5'-diphosphate + ATP = a 2'-deoxyribonucleoside 5'-triphosphate + ADP. The catalysed reaction is a ribonucleoside 5'-diphosphate + ATP = a ribonucleoside 5'-triphosphate + ADP. In terms of biological role, major role in the synthesis of nucleoside triphosphates other than ATP. The ATP gamma phosphate is transferred to the NDP beta phosphate via a ping-pong mechanism, using a phosphorylated active-site intermediate. The sequence is that of Nucleoside diphosphate kinase from Proteus mirabilis (strain HI4320).